Reading from the N-terminus, the 339-residue chain is UPF0324 membrane protein spyM18_1033 (339 aa).

9 helical membrane-spanning segments follow: residues 7–24 (KLPGLLLCLLLALPAWYL), 28–50 (FPIIGAPVFAILLGMLLALFYGH), 57–79 (GISFTSKCILQTAVVLLGFGLNL), 84–106 (AVGMQSLPIIISTIATALLVAYG), 118–140 (ATLVGVGSSICGGSAIAATAPVI), 150–172 (AISVIFLFNMLAALLFPSLGQLL), 256–275 (FILFFLLASLITTLMTSFGV), 290–307 (FIVMAMAAIGLNTNLVKL), and 314–336 (AILLGAICWVAITLVSLAMQLSL).

The protein belongs to the UPF0324 family.

It localises to the cell membrane. The polypeptide is UPF0324 membrane protein spyM18_1033 (Streptococcus pyogenes serotype M18 (strain MGAS8232)).